A 59-amino-acid polypeptide reads, in one-letter code: UPF0509 protein KPK_3153 (59 aa).

It belongs to the UPF0509 family.

This chain is UPF0509 protein KPK_3153, found in Klebsiella pneumoniae (strain 342).